Here is a 360-residue protein sequence, read N- to C-terminus: NADH-quinone oxidoreductase subunit H (360 aa).

8 helical membrane passes run 20–40 (GMVW…IPLM), 95–115 (GLFV…WVVI), 130–150 (LLLV…AGWA), 176–196 (FCLL…IVLA), 206–226 (GIGF…VYLI), 261–281 (IFFL…ALMF), 297–317 (IPGW…FIWI), and 336–356 (IFIP…LSPW).

Belongs to the complex I subunit 1 family. As to quaternary structure, NDH-1 is composed of 14 different subunits. Subunits NuoA, H, J, K, L, M, N constitute the membrane sector of the complex.

Its subcellular location is the cell inner membrane. It carries out the reaction a quinone + NADH + 5 H(+)(in) = a quinol + NAD(+) + 4 H(+)(out). Its function is as follows. NDH-1 shuttles electrons from NADH, via FMN and iron-sulfur (Fe-S) centers, to quinones in the respiratory chain. The immediate electron acceptor for the enzyme in this species is believed to be ubiquinone. Couples the redox reaction to proton translocation (for every two electrons transferred, four hydrogen ions are translocated across the cytoplasmic membrane), and thus conserves the redox energy in a proton gradient. This subunit may bind ubiquinone. This chain is NADH-quinone oxidoreductase subunit H, found in Verminephrobacter eiseniae (strain EF01-2).